Reading from the N-terminus, the 187-residue chain is NADH-quinone oxidoreductase subunit B (187 aa).

Cys55, Cys56, Cys121, and Cys150 together coordinate [4Fe-4S] cluster.

This sequence belongs to the complex I 20 kDa subunit family. NDH-1 is composed of 14 different subunits. Subunits NuoB, C, D, E, F, and G constitute the peripheral sector of the complex. [4Fe-4S] cluster is required as a cofactor.

It localises to the cell inner membrane. The enzyme catalyses a quinone + NADH + 5 H(+)(in) = a quinol + NAD(+) + 4 H(+)(out). NDH-1 shuttles electrons from NADH, via FMN and iron-sulfur (Fe-S) centers, to quinones in the respiratory chain. The immediate electron acceptor for the enzyme in this species is believed to be ubiquinone. Couples the redox reaction to proton translocation (for every two electrons transferred, four hydrogen ions are translocated across the cytoplasmic membrane), and thus conserves the redox energy in a proton gradient. The polypeptide is NADH-quinone oxidoreductase subunit B (Bdellovibrio bacteriovorus (strain ATCC 15356 / DSM 50701 / NCIMB 9529 / HD100)).